Here is a 576-residue protein sequence, read N- to C-terminus: Urease subunit alpha (576 aa).

Residues 132–576 form the Urease domain; it reads GGIDTHIHFI…LPMAQRYFLF (445 aa). Ni(2+)-binding residues include H137, H139, and K220. K220 is subject to N6-carboxylysine. H222 lines the substrate pocket. The Ni(2+) site is built by H249 and H275. H323 (proton donor) is an active-site residue. D363 contacts Ni(2+).

This sequence belongs to the metallo-dependent hydrolases superfamily. Urease alpha subunit family. In terms of assembly, heterotrimer of UreA (gamma), UreB (beta) and UreC (alpha) subunits. Three heterotrimers associate to form the active enzyme. The cofactor is Ni cation. In terms of processing, carboxylation allows a single lysine to coordinate two nickel ions.

It localises to the cytoplasm. It carries out the reaction urea + 2 H2O + H(+) = hydrogencarbonate + 2 NH4(+). It functions in the pathway nitrogen metabolism; urea degradation; CO(2) and NH(3) from urea (urease route): step 1/1. The chain is Urease subunit alpha from Paenarthrobacter aurescens (strain TC1).